Consider the following 378-residue polypeptide: Endopolygalacturonase I (378 aa).

An N-terminal signal peptide occupies residues 1–20 (MHLNTTLLVSLALGAASVLA). Residues 21-39 (SPAPPAITAPPTAEEIAKR) constitute a propeptide that is removed on maturation. Cys43 and Cys61 are joined by a disulfide. An O-linked (Man...) threonine glycan is attached at Thr44. O-linked (Man...) serine glycosylation is found at Ser46, Ser48, Ser52, Ser53, Ser55, Ser57, and Ser62. Thr63 carries O-linked (Man...) threonine glycosylation. O-linked (Man...) serine glycosylation occurs at Ser73. PbH1 repeat units lie at residues 174–204 (SDYL…DIGT), 205–226 (STYV…AVNS), 227–247 (GENI…SIGS), 256–277 (VKNV…RIKT), and 285–307 (VSDV…VVQQ). Asp219 serves as the catalytic Proton donor. Cys221 and Cys237 are joined by a disulfide. His241 is an active-site residue. A glycan (N-linked (GlcNAc...) asparagine) is linked at Asn258. 2 cysteine pairs are disulfide-bonded: Cys345-Cys350 and Cys369-Cys378.

Belongs to the glycosyl hydrolase 28 family.

It localises to the secreted. The enzyme catalyses (1,4-alpha-D-galacturonosyl)n+m + H2O = (1,4-alpha-D-galacturonosyl)n + (1,4-alpha-D-galacturonosyl)m.. Functionally, involved in maceration and soft-rotting of plant tissue. Hydrolyzes the 1,4-alpha glycosidic bonds of de-esterified pectate in the smooth region of the plant cell wall. The protein is Endopolygalacturonase I (pgaI) of Aspergillus aculeatus.